The chain runs to 137 residues: Large ribosomal subunit protein bL21 (137 aa).

Positions 1–26 (MADTKTATPATDAEEATATPPAAAPS) are disordered.

It belongs to the bacterial ribosomal protein bL21 family. Part of the 50S ribosomal subunit. Contacts protein L20.

In terms of biological role, this protein binds to 23S rRNA in the presence of protein L20. The protein is Large ribosomal subunit protein bL21 of Parasynechococcus marenigrum (strain WH8102).